Reading from the N-terminus, the 269-residue chain is UPF0761 membrane protein HI_0276 (269 aa).

Transmembrane regions (helical) follow at residues 32–52 (MLAM…FPVF), 89–109 (MSAV…NNID), 128–148 (FAIY…SIGI), 168–188 (LLSF…YTVV), 203–223 (FLAA…IVTF), and 232–252 (AMAT…VVLV).

This sequence belongs to the UPF0761 family.

The protein localises to the cell inner membrane. The chain is UPF0761 membrane protein HI_0276 from Haemophilus influenzae (strain ATCC 51907 / DSM 11121 / KW20 / Rd).